Here is a 203-residue protein sequence, read N- to C-terminus: Ribonuclease HII (203 aa).

The RNase H type-2 domain maps to 15–201 (LLVAGLDEAG…VAQAPLRFPE (187 aa)). Residues D21, E22, and D111 each coordinate a divalent metal cation.

It belongs to the RNase HII family. The cofactor is Mn(2+). Mg(2+) is required as a cofactor.

It localises to the cytoplasm. The catalysed reaction is Endonucleolytic cleavage to 5'-phosphomonoester.. Endonuclease that specifically degrades the RNA of RNA-DNA hybrids. The chain is Ribonuclease HII from Thermus thermophilus (strain ATCC 27634 / DSM 579 / HB8).